Here is a 374-residue protein sequence, read N- to C-terminus: MEEMLESNEMIVHLGPQHPMQPGPFRLNLKLKGETIMDAEVEMGYIHKGIEKILENRTYLQGITIVDRICYLVALTNEECYVGCVEKLLDIEPPERAQYIRVILEELSRLQSHLLGLGEYGEFIGFVSMFMYTIKEREDILTLIDMVTGARVTHSYLRFGGVRDDLPEGFKEKTIPVLNKLKKVIRDYEEMFYSDTIYRERTIGIGVLTADEAKSLGVSGPVLRATGVPFDIRKNEPYLVYRDLDFKVCTETAGDCFARVQVRLNEMRESIYIIEQCLDMIPNGPIFPEGTPYGKRTPVMRVPAGEVFHRVEDPRGEMGMYMVSDGSDRPYRVKVRGPYYPTLQALPPLIIGTTVADMVSISGSMDGCTSEVDR.

The protein belongs to the complex I 49 kDa subunit family. As to quaternary structure, the FPO complex is composed of at least 13 different subunits.

It is found in the cell inner membrane. It carries out the reaction methanophenazine + reduced coenzyme F420-(gamma-L-Glu)(n) = dihydromethanophenazine + oxidized coenzyme F420-(gamma-L-Glu)(n) + H(+). In terms of biological role, component of the F(420)H(2) dehydrogenase (FPO complex) which is part of the energy-conserving F(420)H(2):heterodisulfide oxidoreductase system. The membrane-bound electron transfer system of the complex plays an important role in the metabolism of methylotrophic methanogens when the organisms grow on methanol or methylamines. Catalyzes the oxidation of methanophenazine to dihydromethanophenazine. It shuttles electrons from F(420)H(2), via FAD and iron-sulfur (Fe-S) centers, to methanophenazine (an electron carrier in the membrane). It couples the redox reaction to proton translocation (for every two electrons transferred, two hydrogen ions are translocated across the cytoplasmic membrane), and thus conserves the redox energy in a proton gradient. It also catalyzes the oxidation of F(420)H(2) with quinones such as 2,3-dimethyl-1,4-naphthoquinone, 2-methyl-1,4-naphthoquinone and tetramethyl-p-benzoquinone. The sequence is that of F(420)H(2) dehydrogenase subunit D (fpoD) from Methanosarcina mazei (strain ATCC BAA-159 / DSM 3647 / Goe1 / Go1 / JCM 11833 / OCM 88) (Methanosarcina frisia).